The chain runs to 263 residues: ATP synthase subunit a (263 aa).

A run of 5 helical transmembrane segments spans residues 31 to 51 (LDTLFFSILLGCSFCWLFYSI), 89 to 109 (IGSLALTLFCWIFFWNVMDLI), 133 to 153 (DPNATFALSISVVLITLVYTF), 205 to 225 (LFGNLFAGEIVFILITFLPFW), and 235 to 255 (AIFHILVVTLQAYVFMILTIV).

Belongs to the ATPase A chain family. In terms of assembly, F-type ATPases have 2 components, CF(1) - the catalytic core - and CF(0) - the membrane proton channel. CF(1) has five subunits: alpha(3), beta(3), gamma(1), delta(1), epsilon(1). CF(0) has three main subunits: a(1), b(2) and c(9-12). The alpha and beta chains form an alternating ring which encloses part of the gamma chain. CF(1) is attached to CF(0) by a central stalk formed by the gamma and epsilon chains, while a peripheral stalk is formed by the delta and b chains.

The protein resides in the cell inner membrane. In terms of biological role, key component of the proton channel; it plays a direct role in the translocation of protons across the membrane. This is ATP synthase subunit a from Dichelobacter nodosus (strain VCS1703A).